The primary structure comprises 216 residues: Type-4 uracil-DNA glycosylase (216 aa).

Cysteine 14 and cysteine 17 together coordinate [4Fe-4S] cluster. Uracil-binding positions include 41–43 (GEA), phenylalanine 55, and asparagine 82. Positions 86 and 102 each coordinate [4Fe-4S] cluster. Position 164 (histidine 164) interacts with uracil.

This sequence belongs to the uracil-DNA glycosylase (UDG) superfamily. Type 4 (UDGa) family. In terms of assembly, interacts with the sliding clamp PCNA3 subunit.

The catalysed reaction is Hydrolyzes single-stranded DNA or mismatched double-stranded DNA and polynucleotides, releasing free uracil.. Its function is as follows. Removes uracil bases that are present in DNA as a result of either deamination of cytosine or misincorporation of dUMP instead of dTMP. Can remove uracil from double-stranded DNA containing either a U/G or U/A base pair as well as from single-stranded DNA. The polypeptide is Type-4 uracil-DNA glycosylase (Saccharolobus solfataricus (strain ATCC 35092 / DSM 1617 / JCM 11322 / P2) (Sulfolobus solfataricus)).